The sequence spans 583 residues: Sensor protein SrrB (583 aa).

Topologically, residues 1 to 11 (MMSRLNSVVIK) are cytoplasmic. The helical transmembrane segment at 12-32 (LWLTIILIVTTVLILLSIALI) threads the bilayer. Over 33 to 174 (TFMQYYFTQE…SIEDTNNAIT (142 aa)) the chain is Extracellular. A helical membrane pass occupies residues 175 to 195 (IITIITAVIFLTITTVFAFFL). Over 196–583 (SSRITKPLRR…TFIIKLPKPE (388 aa)) the chain is Cytoplasmic. The region spanning 197 to 249 (SRITKPLRRLRDQATRVSEGDYSYKPSVTTKDEIGQLSQAFNQMSTEIEEHVD) is the HAMP domain. In terms of domain architecture, Histidine kinase spans 366-583 (NVSHELRTPI…TFIIKLPKPE (218 aa)). A Phosphohistidine; by autocatalysis modification is found at His369.

It localises to the cell membrane. The catalysed reaction is ATP + protein L-histidine = ADP + protein N-phospho-L-histidine.. Functionally, member of the two-component regulatory system SrrA/SrrB, which is involved in the global regulation of staphylococcal virulence factors in response to environmental oxygen levels as well as biofilm formation. Also plays an essential role in host-derived nitric oxide resistance by regulating hmp/flavohemoglobin, an enzyme that detoxifies nitric oxide by converting it to nitrate. Functions as a sensor protein kinase which is autophosphorylated at a histidine residue and transfers its phosphate group to SrrA. In turn, SrrA binds to the upstream promoter regions of the target genes to positively and negatively regulate their expression. This chain is Sensor protein SrrB (srrB), found in Staphylococcus aureus (strain Mu50 / ATCC 700699).